A 217-amino-acid polypeptide reads, in one-letter code: Probable transaldolase (217 aa).

The active-site Schiff-base intermediate with substrate is Lys-84.

This sequence belongs to the transaldolase family. Type 3B subfamily.

The protein resides in the cytoplasm. It catalyses the reaction D-sedoheptulose 7-phosphate + D-glyceraldehyde 3-phosphate = D-erythrose 4-phosphate + beta-D-fructose 6-phosphate. It participates in carbohydrate degradation; pentose phosphate pathway; D-glyceraldehyde 3-phosphate and beta-D-fructose 6-phosphate from D-ribose 5-phosphate and D-xylulose 5-phosphate (non-oxidative stage): step 2/3. Its function is as follows. Transaldolase is important for the balance of metabolites in the pentose-phosphate pathway. The protein is Probable transaldolase of Roseiflexus castenholzii (strain DSM 13941 / HLO8).